The following is a 215-amino-acid chain: dITP/XTP pyrophosphatase (215 aa).

13–18 (THNTGK) provides a ligand contact to substrate. The Proton acceptor role is filled by aspartate 74. Residue aspartate 74 participates in Mg(2+) binding. Substrate contacts are provided by residues serine 75, 163–166 (FGFD), lysine 186, and 199–200 (HR).

The protein belongs to the HAM1 NTPase family. As to quaternary structure, homodimer. It depends on Mg(2+) as a cofactor.

It catalyses the reaction XTP + H2O = XMP + diphosphate + H(+). It carries out the reaction dITP + H2O = dIMP + diphosphate + H(+). The enzyme catalyses ITP + H2O = IMP + diphosphate + H(+). In terms of biological role, pyrophosphatase that catalyzes the hydrolysis of nucleoside triphosphates to their monophosphate derivatives, with a high preference for the non-canonical purine nucleotides XTP (xanthosine triphosphate), dITP (deoxyinosine triphosphate) and ITP. Seems to function as a house-cleaning enzyme that removes non-canonical purine nucleotides from the nucleotide pool, thus preventing their incorporation into DNA/RNA and avoiding chromosomal lesions. The chain is dITP/XTP pyrophosphatase from Bartonella quintana (strain Toulouse) (Rochalimaea quintana).